The chain runs to 181 residues: Large ribosomal subunit protein uL6 (181 aa).

It belongs to the universal ribosomal protein uL6 family. As to quaternary structure, part of the 50S ribosomal subunit.

Its function is as follows. This protein binds to the 23S rRNA, and is important in its secondary structure. It is located near the subunit interface in the base of the L7/L12 stalk, and near the tRNA binding site of the peptidyltransferase center. The chain is Large ribosomal subunit protein uL6 from Hydrogenobaculum sp. (strain Y04AAS1).